The sequence spans 207 residues: Sodium/potassium-transporting ATPase subunit beta-1-interacting protein 1 (207 aa).

Helical transmembrane passes span 2–22 (GRCDGRCTLVVICCLQLVAAL), 35–55 (APILANFLHIMAVILGVFGTV), and 62–82 (LILYAVWLVVWVGWNSFIICF). Asn100 carries an N-linked (GlcNAc...) asparagine glycan. A helical membrane pass occupies residues 147 to 167 (VVSSALQVFLALFGFVYACYV).

Belongs to the NKAIN family. As to quaternary structure, interacts with atp1b1 C-terminus.

It is found in the cell membrane. This is Sodium/potassium-transporting ATPase subunit beta-1-interacting protein 1 (nkain1) from Danio rerio (Zebrafish).